A 271-amino-acid chain; its full sequence is Vacuolar arginine/histidine antiporter stm1 (271 aa).

The 67-residue stretch at 14 to 80 (LTELSSFLGA…GNVSSTVLVL (67 aa)) folds into the PQ-loop 1 domain. The next 3 helical transmembrane spans lie at 17–37 (LSSF…IPQL), 49–69 (ISDL…LGSI), and 77–97 (VLVL…QIYY). Phosphoserine is present on Ser119. Transmembrane regions (helical) follow at residues 144–164 (FGVM…IISS), 178–198 (PFTA…PQII), 211–231 (IIFF…ILVF), and 245–265 (PWIL…YQFI). A PQ-loop 2 domain is found at 185-239 (SSVLYFCARIPQIIKNHKAKSTEGLSIIFFVLASVGNTSYAFSILVFPASDYLNY).

Belongs to the laat-1 family.

It is found in the vacuole membrane. The enzyme catalyses L-histidine(out) + L-arginine(in) = L-histidine(in) + L-arginine(out). Its function is as follows. Amino acid transporter that moves basic amino acids across the vacuolar membrane. Appears to function as an arginine/histidine antiporter. This Schizosaccharomyces pombe (strain 972 / ATCC 24843) (Fission yeast) protein is Vacuolar arginine/histidine antiporter stm1 (stm1).